A 239-amino-acid chain; its full sequence is DnaA regulatory inactivator Hda (239 aa).

The protein belongs to the DnaA family. HdA subfamily. In terms of assembly, the active form seems to be an ADP-bound monomer. Forms the RIDA complex (regulatory inactivation of DnaA) of ATP-DnaA, ADP-Hda and the DNA-loaded beta sliding clamp (dnaN).

Mediates the interaction of DNA replication initiator protein DnaA with DNA polymerase subunit beta sliding clamp (dnaN). Stimulates hydrolysis of ATP-DnaA to ADP-DnaA, rendering DnaA inactive for reinitiation, a process called regulatory inhibition of DnaA or RIDA. The chain is DnaA regulatory inactivator Hda from Yersinia pseudotuberculosis serotype O:1b (strain IP 31758).